The chain runs to 572 residues: Urease subunit alpha (572 aa).

The Urease domain occupies 133–572 (GGIDLHVHYI…TSLSQRYFLF (440 aa)). The Ni(2+) site is built by His138, His140, and Lys221. N6-carboxylysine is present on Lys221. His223 is a substrate binding site. Positions 250 and 276 each coordinate Ni(2+). His324 acts as the Proton donor in catalysis. Asp364 serves as a coordination point for Ni(2+).

This sequence belongs to the metallo-dependent hydrolases superfamily. Urease alpha subunit family. As to quaternary structure, heterotrimer of UreA (gamma), UreB (beta) and UreC (alpha) subunits. Three heterotrimers associate to form the active enzyme. Ni cation serves as cofactor. Post-translationally, carboxylation allows a single lysine to coordinate two nickel ions.

The protein resides in the cytoplasm. It catalyses the reaction urea + 2 H2O + H(+) = hydrogencarbonate + 2 NH4(+). It functions in the pathway nitrogen metabolism; urea degradation; CO(2) and NH(3) from urea (urease route): step 1/1. In Streptococcus thermophilus (strain CNRZ 1066), this protein is Urease subunit alpha.